A 221-amino-acid chain; its full sequence is Oxaloacetate tautomerase FAHD1, mitochondrial (221 aa).

The N-terminal 24 residues, 1–24, are a transit peptide targeting the mitochondrion; sequence MASTKPLSRFWEWGKNIVCVGRNY. Arg-22 contributes to the oxalate binding site. Ser-37 carries the phosphoserine modification. Residues Glu-68, Glu-70, and Asp-99 each contribute to the Mg(2+) site. An N6-acetyllysine modification is found at Lys-110. Lys-112 bears the N6-succinyllysine mark. Residue Lys-120 coordinates oxalate.

This sequence belongs to the FAH family. Homodimer. Mg(2+) is required as a cofactor. Mn(2+) serves as cofactor. As to expression, ubiquitous with higher expression in the liver and the kidney (at protein level).

Its subcellular location is the mitochondrion. The protein localises to the cytoplasm. It localises to the cytosol. The enzyme catalyses oxaloacetate = enol-oxaloacetate. It catalyses the reaction oxaloacetate + H(+) = pyruvate + CO2. It carries out the reaction a 3-acylpyruvate + H2O = a carboxylate + pyruvate + H(+). The catalysed reaction is acetylpyruvate + H2O = acetate + pyruvate + H(+). The enzyme catalyses 3-fumarylpyruvate + H2O = fumarate + pyruvate + H(+). Its activity is regulated as follows. Oxaloacetate decarboxylation is potently and competitively inhibited by oxalate. Functionally, tautomerase that converts enol-oxaloacetate, a strong inhibitor of succinate dehydrogenase, to the physiological keto form of oxaloacetate. It is thereby required to maximize aerobic respiration efficiency by preventing succinate dehydrogenase inhibition. Also acts as a weak oxaloacetate decarboxylase (ODx), catalyzing the decarboxylation of oxaloacetate (OAA) to pyruvate and CO(2), and as such is likely a regulatory enzyme in the TCA cycle. Also displays acylpyruvase activity, being able to hydrolyze acetylpyruvate and fumarylpyruvate in vitro. In Mus musculus (Mouse), this protein is Oxaloacetate tautomerase FAHD1, mitochondrial.